Here is a 250-residue protein sequence, read N- to C-terminus: Beta-crystallin B1 (250 aa).

Positions 1-13 (MSQAAKASATTAV) are enriched in polar residues. Residues 1-49 (MSQAAKASATTAVNPGPDGKGKGAPSTGPAPAPGPTPVPASVPRPAAKV) are disordered. An N-acetylserine modification is found at Ser-2. The tract at residues 2-56 (SQAAKASATTAVNPGPDGKGKGAPSTGPAPAPGPTPVPASVPRPAAKVGDLPPGS) is N-terminal arm. A compositionally biased stretch (pro residues) spans 28–42 (GPAPAPGPTPVPASV). 2 consecutive Beta/gamma crystallin 'Greek key' domains span residues 57-96 (YRLI…IVVS) and 97-141 (GPWV…RPIR). A connecting peptide region spans residues 142-146 (MDSQE). 2 Beta/gamma crystallin 'Greek key' domains span residues 147–188 (HKIC…TVSG) and 189–231 (GTWV…RRLR). Residues 233 to 250 (RQWHQEGCFPVLTAEPPK) are C-terminal arm.

The protein belongs to the beta/gamma-crystallin family. In terms of assembly, homo/heterodimer, or complexes of higher-order. The structure of beta-crystallin oligomers seems to be stabilized through interactions between the N-terminal arms. In terms of processing, specific cleavages in the N-terminal arm occur during lens maturation and give rise to truncated forms, leading to impaired oligomerization and protein insolubilization. The protease responsible for this partial degradation could be calpain II.

Functionally, crystallins are the dominant structural components of the vertebrate eye lens. This Mus musculus (Mouse) protein is Beta-crystallin B1 (Crybb1).